The primary structure comprises 283 residues: Diaminopimelate epimerase (283 aa).

Substrate contacts are provided by asparagine 11 and asparagine 65. Cysteine 74 (proton donor) is an active-site residue. Substrate-binding positions include 75-76 (GN), asparagine 163, asparagine 196, and 214-215 (ER). The active-site Proton acceptor is cysteine 223. Residue 224-225 (GT) coordinates substrate.

This sequence belongs to the diaminopimelate epimerase family. Homodimer.

The protein localises to the cytoplasm. The enzyme catalyses (2S,6S)-2,6-diaminopimelate = meso-2,6-diaminopimelate. Its pathway is amino-acid biosynthesis; L-lysine biosynthesis via DAP pathway; DL-2,6-diaminopimelate from LL-2,6-diaminopimelate: step 1/1. Catalyzes the stereoinversion of LL-2,6-diaminopimelate (L,L-DAP) to meso-diaminopimelate (meso-DAP), a precursor of L-lysine and an essential component of the bacterial peptidoglycan. The polypeptide is Diaminopimelate epimerase (Desulfitobacterium hafniense (strain DSM 10664 / DCB-2)).